A 217-amino-acid chain; its full sequence is GTP cyclohydrolase 1 (217 aa).

Positions 109, 112, and 180 each coordinate Zn(2+).

The protein belongs to the GTP cyclohydrolase I family. In terms of assembly, toroid-shaped homodecamer, composed of two pentamers of five dimers.

The catalysed reaction is GTP + H2O = 7,8-dihydroneopterin 3'-triphosphate + formate + H(+). The protein operates within cofactor biosynthesis; 7,8-dihydroneopterin triphosphate biosynthesis; 7,8-dihydroneopterin triphosphate from GTP: step 1/1. This is GTP cyclohydrolase 1 from Vibrio parahaemolyticus serotype O3:K6 (strain RIMD 2210633).